We begin with the raw amino-acid sequence, 515 residues long: Putative myristoylated protein 118L (515 aa).

G2 carries the N-myristoyl glycine; by host lipid modification. The next 3 membrane-spanning stretches (helical) occupy residues 188 to 208 (LSLA…VGGV), 214 to 234 (IIFP…FQWT), and 482 to 502 (WLLY…AFSS).

The protein belongs to the IIV-6 118L/458R family.

Its subcellular location is the membrane. This chain is Putative myristoylated protein 118L, found in Acheta domesticus (House cricket).